Reading from the N-terminus, the 406-residue chain is uncharacterized protein (406 aa).

This is an uncharacterized protein from Acanthamoeba polyphaga mimivirus (APMV).